The sequence spans 691 residues: Elongation factor G (691 aa).

The tr-type G domain occupies 6–281 (SKYRNIGIMA…GVVDFLPSPI (276 aa)). Residues 15-22 (AHIDAGKT), 79-83 (DTPGH), and 133-136 (NKMD) each bind GTP.

The protein belongs to the TRAFAC class translation factor GTPase superfamily. Classic translation factor GTPase family. EF-G/EF-2 subfamily.

It is found in the cytoplasm. Functionally, catalyzes the GTP-dependent ribosomal translocation step during translation elongation. During this step, the ribosome changes from the pre-translocational (PRE) to the post-translocational (POST) state as the newly formed A-site-bound peptidyl-tRNA and P-site-bound deacylated tRNA move to the P and E sites, respectively. Catalyzes the coordinated movement of the two tRNA molecules, the mRNA and conformational changes in the ribosome. The chain is Elongation factor G from Wolbachia pipientis wMel.